The sequence spans 188 residues: Apolipophorin-3 (188 aa).

A signal peptide spans 1–17; the sequence is MVAKLFVLVACIALSHA. A propeptide spanning residues 18–22 is cleaved from the precursor; sequence AMVRR.

The protein belongs to the insect apolipophorin-3 family. In terms of assembly, equilibrium between a soluble monomer and a bound lipoprotein form. Apolipophorin-3 associates with lipophorin during lipid loading until each particle contains 9 or 14 molecules of apolipophorin-3. As to expression, expressed in fat body and secreted in hemolymph. Also expressed in ovary and testis at lower levels.

It localises to the secreted. Functionally, assists in the loading of diacylglycerol, generated from triacylglycerol stores in the fat body through the action of adipokinetic hormone, into lipophorin, the hemolymph lipoprotein. It increases the lipid carrying capacity of lipophorin by covering the expanding hydrophobic surface resulting from diacylglycerol uptake. It thus plays a critical role in the transport of lipids during flight in several species of insects. In Spodoptera litura (Asian cotton leafworm), this protein is Apolipophorin-3.